Here is a 323-residue protein sequence, read N- to C-terminus: Breast cancer metastasis-suppressor 1-like protein (323 aa).

Positions 1–15 (MPVHSREKKENNHDE) are enriched in basic and acidic residues. The tract at residues 1-56 (MPVHSREKKENNHDEMEVDYGENEGSTSEEEETESSSVSEEGDSSEMDDEDCERRR) is disordered. The span at 16 to 51 (MEVDYGENEGSTSEEEETESSSVSEEGDSSEMDDED) shows a compositional bias: acidic residues. Coiled coils occupy residues 50-82 (EDCE…KERL) and 147-178 (EKLL…ITSE).

It belongs to the BRMS1 family.

The protein localises to the nucleus. Its function is as follows. Involved in the histone deacetylase (HDAC1)-dependent transcriptional repression activity. The polypeptide is Breast cancer metastasis-suppressor 1-like protein (BRMS1L) (Gallus gallus (Chicken)).